The sequence spans 448 residues: Asparagine--tRNA ligase (448 aa).

This sequence belongs to the class-II aminoacyl-tRNA synthetase family. As to quaternary structure, homodimer.

Its subcellular location is the cytoplasm. The catalysed reaction is tRNA(Asn) + L-asparagine + ATP = L-asparaginyl-tRNA(Asn) + AMP + diphosphate + H(+). The sequence is that of Asparagine--tRNA ligase from Streptococcus mutans serotype c (strain ATCC 700610 / UA159).